A 112-amino-acid polypeptide reads, in one-letter code: Mitochondrial import inner membrane translocase subunit TIM14-1 (112 aa).

A2 carries the post-translational modification N-acetylalanine. Residues 7 to 23 form a helical membrane-spanning segment; that stretch reads AGVAVAATALAGRYGIQ. Residues 53-112 form the J domain; sequence EAALILGVRESVAAEKVKEAHRKVMVANHPDAGGSHFLASKINEAKDVMLGKTKNSGSAF.

It belongs to the TIM14 family. Probable component of the PAM complex at least composed of a mitochondrial HSP70 protein, TIMM44 and TIMM14. The complex interacts with the TIMM23 component of the TIM17:23 complex.

It is found in the mitochondrion. The protein localises to the mitochondrion inner membrane. Its function is as follows. Component of the PAM complex, a complex required for the translocation of transit peptide-containing proteins from the inner membrane into the mitochondrial matrix in an ATP-dependent manner. In Arabidopsis thaliana (Mouse-ear cress), this protein is Mitochondrial import inner membrane translocase subunit TIM14-1 (TIM14-1).